The primary structure comprises 263 residues: UPF0739 protein C1orf74 homolog (263 aa).

This sequence belongs to the UPF0739 family.

This Bos taurus (Bovine) protein is UPF0739 protein C1orf74 homolog.